A 269-amino-acid polypeptide reads, in one-letter code: Small ribosomal subunit protein uS2 (269 aa).

The disordered stretch occupies residues 228 to 269 (QLDSDDDYEEFDESLAEGDYDDYDEEEDEDSETVSSQEGEEE). The span at 230 to 269 (DSDDDYEEFDESLAEGDYDDYDEEEDEDSETVSSQEGEEE) shows a compositional bias: acidic residues.

Belongs to the universal ribosomal protein uS2 family.

This chain is Small ribosomal subunit protein uS2, found in Crocosphaera subtropica (strain ATCC 51142 / BH68) (Cyanothece sp. (strain ATCC 51142)).